The following is a 181-amino-acid chain: Large ribosomal subunit protein uL22 (181 aa).

Residues 157 to 181 are disordered; the sequence is PEAAKKPGKKTSAVEKSKKATAATH.

Belongs to the universal ribosomal protein uL22 family.

In Biphyllus lunatus (Beetle), this protein is Large ribosomal subunit protein uL22 (RpL17).